Here is a 200-residue protein sequence, read N- to C-terminus: UPF0316 protein SAUSA300_1892 (200 aa).

3 helical membrane passes run 8–28 (PWLM…FLTM), 40–60 (IAAS…GLVM), and 66–86 (IQNI…GMKI).

It belongs to the UPF0316 family.

The protein resides in the cell membrane. The polypeptide is UPF0316 protein SAUSA300_1892 (Staphylococcus aureus (strain USA300)).